A 272-amino-acid chain; its full sequence is tRNA pseudouridine synthase A (272 aa).

The Nucleophile role is filled by Asp-52. Tyr-110 contributes to the substrate binding site.

The protein belongs to the tRNA pseudouridine synthase TruA family. Homodimer.

It catalyses the reaction uridine(38/39/40) in tRNA = pseudouridine(38/39/40) in tRNA. In terms of biological role, formation of pseudouridine at positions 38, 39 and 40 in the anticodon stem and loop of transfer RNAs. In Cupriavidus taiwanensis (strain DSM 17343 / BCRC 17206 / CCUG 44338 / CIP 107171 / LMG 19424 / R1) (Ralstonia taiwanensis (strain LMG 19424)), this protein is tRNA pseudouridine synthase A.